The chain runs to 106 residues: Putative double-stranded DNA mimic protein VCM66_1163 (106 aa).

Belongs to the putative dsDNA mimic protein family.

May act as a double-stranded DNA (dsDNA) mimic. Probably regulates the activity of a dsDNA-binding protein. This Vibrio cholerae serotype O1 (strain M66-2) protein is Putative double-stranded DNA mimic protein VCM66_1163.